The primary structure comprises 468 residues: ATP synthase subunit beta (468 aa).

155–162 (GGAGVGKT) lines the ATP pocket.

It belongs to the ATPase alpha/beta chains family. F-type ATPases have 2 components, CF(1) - the catalytic core - and CF(0) - the membrane proton channel. CF(1) has five subunits: alpha(3), beta(3), gamma(1), delta(1), epsilon(1). CF(0) has three main subunits: a(1), b(2) and c(9-12). The alpha and beta chains form an alternating ring which encloses part of the gamma chain. CF(1) is attached to CF(0) by a central stalk formed by the gamma and epsilon chains, while a peripheral stalk is formed by the delta and b chains.

It localises to the cell inner membrane. The catalysed reaction is ATP + H2O + 4 H(+)(in) = ADP + phosphate + 5 H(+)(out). In terms of biological role, produces ATP from ADP in the presence of a proton gradient across the membrane. The catalytic sites are hosted primarily by the beta subunits. The protein is ATP synthase subunit beta of Thermotoga neapolitana (strain ATCC 49049 / DSM 4359 / NBRC 107923 / NS-E).